The chain runs to 197 residues: MTQLIAGVDEVGRGPLVGDVVTAAVILDPAKPIAGLADSKKISEKKRLALFDIIMQNALAVCVGRASPQEIDELNILHATMLAMKRAVQGLATQPTFVRVDGNRCPNWDYASEAVVKGDSLFAEISAASIIAKVTRDAEMSELHNAHPEYGFAQHKGYPTKAHLEKLAELGPLSQYRMSFKPVQLSLMQRGGQLAGN.

The RNase H type-2 domain maps to 3 to 192; sequence QLIAGVDEVG…VQLSLMQRGG (190 aa). Residues D9, E10, and D101 each contribute to the a divalent metal cation site.

The protein belongs to the RNase HII family. It depends on Mn(2+) as a cofactor. Mg(2+) is required as a cofactor.

The protein localises to the cytoplasm. The catalysed reaction is Endonucleolytic cleavage to 5'-phosphomonoester.. Its function is as follows. Endonuclease that specifically degrades the RNA of RNA-DNA hybrids. The chain is Ribonuclease HII from Pseudoalteromonas atlantica (strain T6c / ATCC BAA-1087).